An 89-amino-acid chain; its full sequence is Long neurotoxin homolog NTL2 (89 aa).

The first 21 residues, 1–21 (MKTLLLSLVVVIIVCLDLGYT), serve as a signal peptide directing secretion. Intrachain disulfides connect C24–C45, C27–C32, C38–C66, C70–C81, and C82–C87. The Cell attachment site motif lies at 54–56 (RGD).

Belongs to the three-finger toxin family. Ancestral subfamily. Orphan group V sub-subfamily. Expressed by the venom gland.

It is found in the secreted. Exhibits M2 muscarinic acetylcholine receptor (CHRM2)-blocking activity, but has a weak binding activity toward nicotinic AChR. Moreover, it inhibits collagen-induced platelet aggregation. The chain is Long neurotoxin homolog NTL2 from Bungarus multicinctus (Many-banded krait).